A 165-amino-acid chain; its full sequence is Bark lectin isoform 2 (165 aa).

N-linked (GlcNAc...) asparagine glycosylation is found at N27 and N57. 2 disulfide bridges follow: C33–C80 and C126–C133.

It belongs to the protease inhibitor I3 (leguminous Kunitz-type inhibitor) family. In terms of assembly, dimer.

Functionally, glucose and N-acetylglucosamine binding lectin. Has hemagglutinating activity against human and rabbit erythrocytes which does not require divalent cations. Inhibits factor Xa and, to a lesser extent, trypsin. Does not inhibit neutrophil elastase, human plasma kallikrein, papain, human plasmin, porcine pancreatic kallikrein and bovin chymotrypsin. Has insecticidal activity against the termite species N.corniger. Induces apoptosis in prostrate cancer cell lines DU145 and PC3. This Crateva tapia (Garlic-pear tree) protein is Bark lectin isoform 2.